The primary structure comprises 339 residues: tRNA N6-adenosine threonylcarbamoyltransferase (339 aa).

His114 and His118 together coordinate Fe cation. Substrate-binding positions include 137–141 (VVSGG), Asp170, Gly183, Asp187, and Asn277. Asp305 contributes to the Fe cation binding site.

Belongs to the KAE1 / TsaD family. Fe(2+) is required as a cofactor.

It localises to the cytoplasm. It carries out the reaction L-threonylcarbamoyladenylate + adenosine(37) in tRNA = N(6)-L-threonylcarbamoyladenosine(37) in tRNA + AMP + H(+). Its function is as follows. Required for the formation of a threonylcarbamoyl group on adenosine at position 37 (t(6)A37) in tRNAs that read codons beginning with adenine. Is involved in the transfer of the threonylcarbamoyl moiety of threonylcarbamoyl-AMP (TC-AMP) to the N6 group of A37, together with TsaE and TsaB. TsaD likely plays a direct catalytic role in this reaction. This chain is tRNA N6-adenosine threonylcarbamoyltransferase, found in Clostridium perfringens (strain ATCC 13124 / DSM 756 / JCM 1290 / NCIMB 6125 / NCTC 8237 / Type A).